Reading from the N-terminus, the 801-residue chain is Interleukin-4 receptor subunit alpha (801 aa).

Positions 1–25 (MGWLCTKFLSSVSCLILLWVTGSGG) are cleaved as a signal peptide. At 26-232 (IKVLGDPTCF…NHFQLPLLQR (207 aa)) the chain is on the extracellular side. A disulfide bond links Cys34 and Cys44. A glycan (N-linked (GlcNAc...) asparagine) is linked at Asn71. Residues Cys74 and Cys86 are joined by a disulfide bond. Positions 125 to 223 (APDNLTLHTN…EWSPSITWYN (99 aa)) constitute a Fibronectin type-III domain. N-linked (GlcNAc...) asparagine glycosylation is found at Asn128, Asn134, and Asn162. At Ser164 the chain carries Phosphoserine. Asn176 carries N-linked (GlcNAc...) asparagine glycosylation. A WSXWS motif motif is present at residues 212–216 (WSEWS). Residues 233–256 (LPLGVSISCICILLFCLTCYFSII) traverse the membrane as a helical segment. At 257–801 (KIKKIWWDQI…PVGTLGVTVS (545 aa)) the chain is on the cytoplasmic side. The Box 1 motif motif lies at 262 to 270 (WWDQIPTPA). A disordered region spans residues 424–476 (VGQSSMAESSSLLPSESGQASTSWACFPTGPSETTCQVTGQQPPHPDPERATG). A compositionally biased stretch (low complexity) spans 426–444 (QSSMAESSSLLPSESGQAS). The segment at 439 to 549 (ESGQASTSWA…ESWEQILHMS (111 aa)) is required for IRS1 activation and IL4-induced cell growth. A compositionally biased stretch (polar residues) spans 454-465 (PSETTCQVTGQQ). Phosphotyrosine is present on Tyr492. Positions 493 to 515 (RSFSDFSSPAPNPGELASEQKQA) are disordered. The tract at residues 549-644 (SVLQHGTAGS…NSMPLFTFGL (96 aa)) is required for IL4-induced gene expression. Phosphotyrosine is present on residues Tyr566, Tyr594, and Tyr622. Positions 698–703 (IVYSSL) match the ITIM motif motif. Residues 767–801 (RTPSNLSGVGKGPGHSPVPSQTTEVPVGTLGVTVS) are disordered.

The protein belongs to the type I cytokine receptor family. Type 4 subfamily. In terms of assembly, the functional IL4 receptor is formed by initial binding of IL4 to IL4R. Subsequent recruitment to the complex of the common gamma chain, in immune cells, creates a type I receptor and, in non-immune cells, of IL13RA1 forms a type II receptor. IL4R can also interact with the IL13/IL13RA1 complex to form a similar type II receptor. Interacts with PIK3C3. Interacts with the SH2-containing phosphatases, PTPN6/SHIP1, PTPN11/SHIP2 and INPP5D/SHIP. Interacts with JAK1 through a Box 1-containing region; inhibited by SOCS5. Interacts with SOCS5; inhibits IL4 signaling. Interacts with JAK3. Interacts with CLM1. Interacts with IL13RA2. On IL4 binding, phosphorylated on C-terminal tyrosine residues. In terms of tissue distribution, isoform 2 is expressed in kidney, spleen, lung and liver.

The protein localises to the cell membrane. The protein resides in the secreted. In terms of biological role, receptor for both interleukin 4 and interleukin 13. Couples to the JAK1/2/3-STAT6 pathway. The IL4 response is involved in promoting Th2 differentiation. The IL4/IL13 responses are involved in regulating IgE production and, chemokine and mucus production at sites of allergic inflammation. In certain cell types, can signal through activation of insulin receptor substrates, IRS1/IRS2. Functionally, isoform 2 (soluble form) inhibits IL4-induced spleen cell proliferation. This chain is Interleukin-4 receptor subunit alpha (Il4r), found in Rattus norvegicus (Rat).